A 299-amino-acid chain; its full sequence is Aliphatic sulfonates import ATP-binding protein SsuB (299 aa).

The ABC transporter domain occupies 36 to 257 (LHVQQVIKRY…QHGSAAFAQI (222 aa)). 68 to 75 (GRSGCGKS) is an ATP binding site.

Belongs to the ABC transporter superfamily. Aliphatic sulfonates importer (TC 3.A.1.17.2) family. In terms of assembly, the complex is composed of two ATP-binding proteins (SsuB), two transmembrane proteins (SsuC) and a solute-binding protein (SsuA).

The protein resides in the cell inner membrane. The enzyme catalyses ATP + H2O + aliphatic sulfonate-[sulfonate-binding protein]Side 1 = ADP + phosphate + aliphatic sulfonateSide 2 + [sulfonate-binding protein]Side 1.. Functionally, part of the ABC transporter complex SsuABC involved in aliphatic sulfonates import. Responsible for energy coupling to the transport system. The polypeptide is Aliphatic sulfonates import ATP-binding protein SsuB (Cupriavidus pinatubonensis (strain JMP 134 / LMG 1197) (Cupriavidus necator (strain JMP 134))).